The following is a 119-amino-acid chain: V-type proton ATPase subunit F (119 aa).

The protein belongs to the V-ATPase F subunit family. V-ATPase is a heteromultimeric enzyme made up of two complexes: the ATP-hydrolytic V1 complex and the proton translocation V0 complex. The V1 complex consists of three catalytic AB heterodimers that form a heterohexamer, three peripheral stalks each consisting of EG heterodimers, one central rotor including subunits D and F, and the regulatory subunits C and H. The proton translocation complex V0 consists of the proton transport subunit a, a ring of proteolipid subunits c9c'', rotary subunit d, subunits e and f, and the accessory subunits ATP6AP1/Ac45 and ATP6AP2/PRR.

It localises to the cytoplasmic vesicle. The protein resides in the secretory vesicle. Its subcellular location is the synaptic vesicle membrane. The protein localises to the clathrin-coated vesicle membrane. Subunit of the V1 complex of vacuolar(H+)-ATPase (V-ATPase), a multisubunit enzyme composed of a peripheral complex (V1) that hydrolyzes ATP and a membrane integral complex (V0) that translocates protons. V-ATPase is responsible for acidifying and maintaining the pH of intracellular compartments and in some cell types, is targeted to the plasma membrane, where it is responsible for acidifying the extracellular environment. This Homo sapiens (Human) protein is V-type proton ATPase subunit F (ATP6V1F).